The chain runs to 172 residues: MAGALRKTMIYLGLADGDEHYEPQPEGKQTRPAQKNEEYVDQEIRHTEPASAHQASEDEYRAPVTPIKRAASNRDDSSGLRQITTVHPRSYNDAKVIGESFRDGIPVIMNVTDMGEGDAKRLVDFSAGLVFGLHGSIERVTNKVFLLSPVFVEVIGDDKKASENQASFFNQS.

Residues 16-78 are disordered; sequence DGDEHYEPQP…RAASNRDDSS (63 aa). Residues 17 to 48 are compositionally biased toward basic and acidic residues; that stretch reads GDEHYEPQPEGKQTRPAQKNEEYVDQEIRHTE.

Belongs to the SepF family. Homodimer. Interacts with FtsZ.

It is found in the cytoplasm. Functionally, cell division protein that is part of the divisome complex and is recruited early to the Z-ring. Probably stimulates Z-ring formation, perhaps through the cross-linking of FtsZ protofilaments. Its function overlaps with FtsA. This is Cell division protein SepF from Renibacterium salmoninarum (strain ATCC 33209 / DSM 20767 / JCM 11484 / NBRC 15589 / NCIMB 2235).